The chain runs to 202 residues: Na(+)-translocating NADH-quinone reductase subunit E (202 aa).

6 helical membrane-spanning segments follow: residues 11–31 (SVFI…FLAV), 35–55 (VTTA…SVPA), 79–99 (LSFL…QILE), 114–134 (GIFL…AFMV), 144–164 (LVFG…LAAV), and 180–200 (LGIT…FSGV).

It belongs to the NqrDE/RnfAE family. In terms of assembly, composed of six subunits; NqrA, NqrB, NqrC, NqrD, NqrE and NqrF.

It localises to the cell inner membrane. It carries out the reaction a ubiquinone + n Na(+)(in) + NADH + H(+) = a ubiquinol + n Na(+)(out) + NAD(+). NQR complex catalyzes the reduction of ubiquinone-1 to ubiquinol by two successive reactions, coupled with the transport of Na(+) ions from the cytoplasm to the periplasm. NqrA to NqrE are probably involved in the second step, the conversion of ubisemiquinone to ubiquinol. In Shewanella denitrificans (strain OS217 / ATCC BAA-1090 / DSM 15013), this protein is Na(+)-translocating NADH-quinone reductase subunit E.